Here is an 834-residue protein sequence, read N- to C-terminus: MHNSEFLSPVQSGTQRGTNRSILNNKKSGKGKKKSVFEAYMTKEEVSAGLKRGELIQGPLRINPKKFHEAYLPSPDGVRDLFIDGVVPRNRALNGDVVVVKLLPQEQWKVLKNDVCEDDDTPGHSTGNKQHALSPHLMKSSAKNPDLIIEAKVDSSAEDGHESALIGCLQKEIKDQDKLGAIEEKTSKQGDPKTFSDDCFQKTAKVVYILEKKHSRAATGFIKPLSDKSSDLARKRALFSPVDHRLPRIYVPLGDCPHDFAIHPETYANTLFICSITAWRDDSNFAEGKLMKSLGQAGEIEPETEGILVEYGVDFSDFPDKVLQCLPQDLPWTIPQEEFQKRKDLRNECIFTIDPATARDLDDALSCKPLPDGNFEVGVHIADVSYFVAEGSALDIMASERATSVYLVQKVIPMLPRLLCEELCSLNPMTDRLTFSVIWKITPQGEILDEWFGRSVICSCVKLSYDHAQNMINHPDKKIEQHELPPVSPQHTINEIHQAVLNLHLIAQNLRKQRFDDGALRLDQLKLTFTLDKESGLPQGCYIYQYRDSNKLVEEFMLLANMAVAHHIYRRFPEEALLRRHPPPQTKMLNDLIEFCDQMGLQLDFSSSGTLHKSLNDQFETDEYSAARKEVLTNMCSRPMQMAVYFCTGALKDETLFHHYALNVPLYTHFTSPIRRFADVIVHRLLAASLGCGPPLKMPKEVIQKQADHCNDRKTASKRVQELSAELFFSVFVKECGPLESEAMVMGVLNEAFDVIVLRFGVQKRIYCNSLPLVNSHFQQVGKRPELTLLWEPEKKGEEPVRQVISIFTLVEVVLKSDNVPLKYTAVLKSPEAQ.

Over residues 1–23 the composition is skewed to polar residues; it reads MHNSEFLSPVQSGTQRGTNRSIL. Positions 1 to 35 are disordered; sequence MHNSEFLSPVQSGTQRGTNRSILNNKKSGKGKKKS. Residues Asp-354 and Asp-363 each contribute to the Mg(2+) site.

It belongs to the RNR ribonuclease family. DIS3L2 subfamily. The cofactor is Mg(2+). Mn(2+) serves as cofactor.

Its subcellular location is the cytoplasm. It localises to the P-body. 3'-5'-exoribonuclease that specifically recognizes RNAs polyuridylated at their 3' end and mediates their degradation. Component of an exosome-independent RNA degradation pathway that mediates degradation of both mRNAs and miRNAs that have been polyuridylated by a terminal uridylyltransferase. Essential for correct mitosis, and negatively regulates cell proliferation. In Xenopus tropicalis (Western clawed frog), this protein is DIS3-like exonuclease 2.